The sequence spans 365 residues: 3-dehydroquinate synthase (365 aa).

NAD(+) contacts are provided by residues 106 to 110 (GVIGD), 130 to 131 (TT), K142, K151, and 169 to 172 (FFAT). Zn(2+)-binding residues include E184, H247, and H264.

Belongs to the sugar phosphate cyclases superfamily. Dehydroquinate synthase family. The cofactor is NAD(+). Co(2+) serves as cofactor. Requires Zn(2+) as cofactor.

The protein resides in the cytoplasm. The catalysed reaction is 7-phospho-2-dehydro-3-deoxy-D-arabino-heptonate = 3-dehydroquinate + phosphate. Its pathway is metabolic intermediate biosynthesis; chorismate biosynthesis; chorismate from D-erythrose 4-phosphate and phosphoenolpyruvate: step 2/7. Catalyzes the conversion of 3-deoxy-D-arabino-heptulosonate 7-phosphate (DAHP) to dehydroquinate (DHQ). This is 3-dehydroquinate synthase from Listeria monocytogenes serovar 1/2a (strain ATCC BAA-679 / EGD-e).